The following is a 778-amino-acid chain: Lon protease (778 aa).

Positions 4–187 (LPVLPLTDAV…LLVGWVRAHL (184 aa)) constitute a Lon N-terminal domain. Position 346–353 (346–353 (GPPGVGKT)) interacts with ATP. The Lon proteolytic domain occupies 581–762 (TAVPGVATGL…ADVLALALRP (182 aa)). Residues S668 and K711 contribute to the active site.

It belongs to the peptidase S16 family. In terms of assembly, homohexamer. Organized in a ring with a central cavity.

Its subcellular location is the cytoplasm. It catalyses the reaction Hydrolysis of proteins in presence of ATP.. In terms of biological role, ATP-dependent serine protease that mediates the selective degradation of mutant and abnormal proteins as well as certain short-lived regulatory proteins. Required for cellular homeostasis and for survival from DNA damage and developmental changes induced by stress. Degrades polypeptides processively to yield small peptide fragments that are 5 to 10 amino acids long. Binds to DNA in a double-stranded, site-specific manner. This chain is Lon protease, found in Salinispora arenicola (strain CNS-205).